The sequence spans 416 residues: NADH-quinone oxidoreductase subunit H (416 aa).

Helical transmembrane passes span 16–36, 84–104, 124–144, 165–185, 197–217, 260–280, 288–308, 320–340, and 353–373; these read LILA…LAAI, PVYL…FAVI, LAVA…GIVL, VVSY…YAGT, STWY…SMVG, VSAL…PISL, WWPL…YIWL, FMAI…MIVA, and WASG…VVLW.

It belongs to the complex I subunit 1 family. NDH-1 is composed of 14 different subunits. Subunits NuoA, H, J, K, L, M, N constitute the membrane sector of the complex.

The protein localises to the cell membrane. The catalysed reaction is a quinone + NADH + 5 H(+)(in) = a quinol + NAD(+) + 4 H(+)(out). In terms of biological role, NDH-1 shuttles electrons from NADH, via FMN and iron-sulfur (Fe-S) centers, to quinones in the respiratory chain. The immediate electron acceptor for the enzyme in this species is believed to be menaquinone. Couples the redox reaction to proton translocation (for every two electrons transferred, four hydrogen ions are translocated across the cytoplasmic membrane), and thus conserves the redox energy in a proton gradient. This subunit may bind ubiquinone. The sequence is that of NADH-quinone oxidoreductase subunit H from Mycobacterium sp. (strain JLS).